The primary structure comprises 99 residues: Acylphosphatase (99 aa).

The 93-residue stretch at 5-97 folds into the Acylphosphatase-like domain; the sequence is VRQVMIRGRV…RPGERFSQLP (93 aa). Catalysis depends on residues Arg-20 and Asn-38.

It belongs to the acylphosphatase family.

It catalyses the reaction an acyl phosphate + H2O = a carboxylate + phosphate + H(+). This chain is Acylphosphatase (acyP), found in Nitrobacter winogradskyi (strain ATCC 25391 / DSM 10237 / CIP 104748 / NCIMB 11846 / Nb-255).